The chain runs to 279 residues: Undecaprenyl-diphosphatase (279 aa).

Helical transmembrane passes span 1–21, 39–59, 96–116, 128–148, 155–175, 201–221, 231–251, and 259–279; these read MVLEAVLLGIVQGITEFLPIS, GRFFLSSVQLGTSFALILYFF, LLLVTGTIPVVLLGFLLVRFV, FTMGVALIVFGLLLGFADALF, IFQITFIESVLIGAAQIFAII, FSFLLSLPVTFIGGMYGLVAG, YSLIGAIVSFVVGLLVVSALL, and FVLFVYYRVLFGLFLVIVSFF.

The protein belongs to the UppP family.

It localises to the cell membrane. The enzyme catalyses di-trans,octa-cis-undecaprenyl diphosphate + H2O = di-trans,octa-cis-undecaprenyl phosphate + phosphate + H(+). In terms of biological role, catalyzes the dephosphorylation of undecaprenyl diphosphate (UPP). Confers resistance to bacitracin. In Tropheryma whipplei (strain TW08/27) (Whipple's bacillus), this protein is Undecaprenyl-diphosphatase.